A 407-amino-acid chain; its full sequence is Tyrosine--tRNA ligase (407 aa).

Tyr-36 is a binding site for L-tyrosine. Residues 41–50 (PTADSLHIGH) carry the 'HIGH' region motif. Residues Tyr-169 and Gln-173 each contribute to the L-tyrosine site. A 'KMSKS' region motif is present at residues 229–233 (KMGKT). Position 232 (Lys-232) interacts with ATP. In terms of domain architecture, S4 RNA-binding spans 341–407 (KGILDILVET…KKSYNRIVIE (67 aa)).

This sequence belongs to the class-I aminoacyl-tRNA synthetase family. TyrS type 1 subfamily. Homodimer.

It is found in the cytoplasm. The enzyme catalyses tRNA(Tyr) + L-tyrosine + ATP = L-tyrosyl-tRNA(Tyr) + AMP + diphosphate + H(+). Its function is as follows. Catalyzes the attachment of tyrosine to tRNA(Tyr) in a two-step reaction: tyrosine is first activated by ATP to form Tyr-AMP and then transferred to the acceptor end of tRNA(Tyr). This chain is Tyrosine--tRNA ligase, found in Clostridium tetani (strain Massachusetts / E88).